A 178-amino-acid polypeptide reads, in one-letter code: Inorganic pyrophosphatase (178 aa).

Residues Lys-29, Arg-43, and Tyr-55 each coordinate substrate. Mg(2+)-binding residues include Asp-65, Asp-70, and Asp-102. Tyr-141 contributes to the substrate binding site.

Belongs to the PPase family. In terms of assembly, homohexamer. Mg(2+) serves as cofactor.

The protein localises to the cytoplasm. The catalysed reaction is diphosphate + H2O = 2 phosphate + H(+). Its function is as follows. Catalyzes the hydrolysis of inorganic pyrophosphate (PPi) forming two phosphate ions. This chain is Inorganic pyrophosphatase, found in Rickettsia typhi (strain ATCC VR-144 / Wilmington).